The following is an 840-amino-acid chain: Probable sulfate permease C869.05c (840 aa).

The next 12 membrane-spanning stretches (helical) occupy residues 120 to 140 (WLIN…PQGM), 148 to 168 (LPSE…CFFA), 173 to 193 (VSIG…ANVM), 208 to 228 (LALL…GFII), 230 to 250 (FIPV…ILSG), 278 to 298 (LPDT…LFFT), 315 to 335 (AFFL…TAIS), 410 to 430 (LIAM…PATG), 447 to 467 (IAGI…TDAF), 470 to 490 (IPNA…ILPM), 505 to 525 (CIFF…GIYV), and 527 to 547 (VCLA…SFLG). An STAS domain is found at 578–733 (NLEIQSPPPG…CVEVAAPLRD (156 aa)). Ser-823 is modified (phosphoserine).

This sequence belongs to the SLC26A/SulP transporter (TC 2.A.53) family.

It localises to the membrane. Its function is as follows. High affinity uptake of sulfate into the cell. The chain is Probable sulfate permease C869.05c from Schizosaccharomyces pombe (strain 972 / ATCC 24843) (Fission yeast).